The chain runs to 248 residues: FCS-Like Zinc finger 14 (248 aa).

Positions 85-94 are enriched in polar residues; the sequence is VCRSEPNQPG. The interval 85–108 is disordered; sequence VCRSEPNQPGRSDPVQFMSHGGST. Residues 181–224 form an FLZ-type zinc finger; that stretch reads GFLNSCYLCRKKLHGQDIFIYRGEKAFCSTECRSSHIANDERKE.

It belongs to the FLZ family. As to quaternary structure, interacts with KIN10 and KIN11 via its FLZ-type zinc finger domain. Interacts with KINB1, KINB2 and KINB3 via its N-terminal part.

The protein resides in the cytoplasm. It localises to the nucleus. May act as an adapter to facilitate the interaction of SnRK1 complex with effector proteins, conferring tissue- and stimulus-type specific differences in the SnRK1 regulation pathway. This is FCS-Like Zinc finger 14 from Arabidopsis thaliana (Mouse-ear cress).